The sequence spans 737 residues: Translation initiation factor IF-2 (737 aa).

Over residues E69–M80 the composition is skewed to basic and acidic residues. A disordered region spans residues E69–G130. 2 stretches are compositionally biased toward basic residues: residues N95–K108 and H121–G130. The region spanning E237–E404 is the tr-type G domain. The tract at residues G246–T253 is G1. A GTP-binding site is contributed by G246–T253. The G2 stretch occupies residues G271–K275. A G3 region spans residues D292–G295. Residues D292–H296 and N346–D349 contribute to the GTP site. A G4 region spans residues N346–D349. The interval S382–K384 is G5.

The protein belongs to the TRAFAC class translation factor GTPase superfamily. Classic translation factor GTPase family. IF-2 subfamily.

It is found in the cytoplasm. Its function is as follows. One of the essential components for the initiation of protein synthesis. Protects formylmethionyl-tRNA from spontaneous hydrolysis and promotes its binding to the 30S ribosomal subunits. Also involved in the hydrolysis of GTP during the formation of the 70S ribosomal complex. The polypeptide is Translation initiation factor IF-2 (Fusobacterium nucleatum subsp. nucleatum (strain ATCC 25586 / DSM 15643 / BCRC 10681 / CIP 101130 / JCM 8532 / KCTC 2640 / LMG 13131 / VPI 4355)).